We begin with the raw amino-acid sequence, 354 residues long: Methionine import ATP-binding protein MetN (354 aa).

The ABC transporter domain maps to 8–250 (LDHIDITFRQ…PKEALTQEFI (243 aa)). 42 to 49 (GYSGAGKS) contacts ATP.

The protein belongs to the ABC transporter superfamily. Methionine importer (TC 3.A.1.24) family. In terms of assembly, the complex is composed of two ATP-binding proteins (MetN), two transmembrane proteins (MetI) and a solute-binding protein (MetQ).

The protein resides in the cell membrane. It catalyses the reaction L-methionine(out) + ATP + H2O = L-methionine(in) + ADP + phosphate + H(+). The enzyme catalyses D-methionine(out) + ATP + H2O = D-methionine(in) + ADP + phosphate + H(+). Part of the ABC transporter complex MetNIQ involved in methionine import. Responsible for energy coupling to the transport system. The protein is Methionine import ATP-binding protein MetN of Streptococcus pyogenes serotype M2 (strain MGAS10270).